We begin with the raw amino-acid sequence, 471 residues long: Argininosuccinate lyase (471 aa).

Belongs to the lyase 1 family. Argininosuccinate lyase subfamily.

The protein resides in the cytoplasm. The catalysed reaction is 2-(N(omega)-L-arginino)succinate = fumarate + L-arginine. It participates in amino-acid biosynthesis; L-arginine biosynthesis; L-arginine from L-ornithine and carbamoyl phosphate: step 3/3. The chain is Argininosuccinate lyase from Renibacterium salmoninarum (strain ATCC 33209 / DSM 20767 / JCM 11484 / NBRC 15589 / NCIMB 2235).